The chain runs to 212 residues: ATP-dependent dethiobiotin synthetase BioD (212 aa).

13–18 (GIGKTV) provides a ligand contact to ATP. Thr-17 is a binding site for Mg(2+). Lys-33 is an active-site residue. Residue Ser-37 coordinates substrate. Glu-100 serves as a coordination point for Mg(2+). ATP contacts are provided by residues 100–103 (EGAG) and 184–186 (PLL).

It belongs to the dethiobiotin synthetase family. As to quaternary structure, homodimer. Mg(2+) is required as a cofactor.

It is found in the cytoplasm. It carries out the reaction (7R,8S)-7,8-diammoniononanoate + CO2 + ATP = (4R,5S)-dethiobiotin + ADP + phosphate + 3 H(+). It participates in cofactor biosynthesis; biotin biosynthesis; biotin from 7,8-diaminononanoate: step 1/2. Catalyzes a mechanistically unusual reaction, the ATP-dependent insertion of CO2 between the N7 and N8 nitrogen atoms of 7,8-diaminopelargonic acid (DAPA, also called 7,8-diammoniononanoate) to form a ureido ring. The sequence is that of ATP-dependent dethiobiotin synthetase BioD from Brucella canis (strain ATCC 23365 / NCTC 10854 / RM-666).